The chain runs to 72 residues: DNA gyrase inhibitor YacG (72 aa).

The Zn(2+) site is built by C17, C20, C32, and C36. The segment at 51-72 (IPGPEEEEMSYPPRSDDENRSR) is disordered.

The protein belongs to the DNA gyrase inhibitor YacG family. As to quaternary structure, interacts with GyrB. The cofactor is Zn(2+).

Its function is as follows. Inhibits all the catalytic activities of DNA gyrase by preventing its interaction with DNA. Acts by binding directly to the C-terminal domain of GyrB, which probably disrupts DNA binding by the gyrase. The chain is DNA gyrase inhibitor YacG from Methylorubrum extorquens (strain PA1) (Methylobacterium extorquens).